We begin with the raw amino-acid sequence, 458 residues long: NADH-ubiquinone oxidoreductase chain 4 (458 aa).

13 consecutive transmembrane segments (helical) span residues 22 to 42 (FFWT…FIFT), 63 to 83 (MISA…ALAS), 96 to 116 (LLYI…FLST), 117 to 137 (NLMN…LIIF), 150 to 170 (IYLS…LLFL), 194 to 214 (ILWL…GFHL), 224 to 244 (TIAG…YGMI), 257 to 277 (LSLI…FICL), 284 to 306 (ALIA…TLSL), 311 to 333 (GAFI…ANSN), 350 to 370 (MLLP…LAMP), 391 to 413 (LTFP…MFML), and 434 to 454 (LTLF…NMII).

Belongs to the complex I subunit 4 family.

The protein resides in the mitochondrion membrane. The catalysed reaction is a ubiquinone + NADH + 5 H(+)(in) = a ubiquinol + NAD(+) + 4 H(+)(out). Functionally, core subunit of the mitochondrial membrane respiratory chain NADH dehydrogenase (Complex I) that is believed to belong to the minimal assembly required for catalysis. Complex I functions in the transfer of electrons from NADH to the respiratory chain. The immediate electron acceptor for the enzyme is believed to be ubiquinone. The protein is NADH-ubiquinone oxidoreductase chain 4 (MT-ND4) of Myxine glutinosa (Atlantic hagfish).